Reading from the N-terminus, the 41-residue chain is Large ribosomal subunit protein bL36 (41 aa).

Belongs to the bacterial ribosomal protein bL36 family.

The chain is Large ribosomal subunit protein bL36 from Methylorubrum extorquens (strain CM4 / NCIMB 13688) (Methylobacterium extorquens).